The chain runs to 1199 residues: Pyruvate-flavodoxin oxidoreductase (1199 aa).

2 4Fe-4S ferredoxin-type domains span residues E699–Y728 and F755–L784. [4Fe-4S] cluster contacts are provided by C708, C711, C714, C718, C764, C767, C770, C774, C838, C841, C866, and C1103.

Belongs to the pyruvate:ferredoxin/flavodoxin oxidoreductase family. [4Fe-4S] cluster serves as cofactor.

The catalysed reaction is oxidized [flavodoxin] + pyruvate + CoA + 2 H(+) = reduced [flavodoxin] + acetyl-CoA + CO2. Functionally, oxidoreductase required for the transfer of electrons from pyruvate to flavodoxin, which reduces nitrogenase. This chain is Pyruvate-flavodoxin oxidoreductase (nifJ), found in Nostoc sp. (strain PCC 7120 / SAG 25.82 / UTEX 2576).